The primary structure comprises 363 residues: Peptide chain release factor 1 (363 aa).

Gln-237 carries the N5-methylglutamine modification. Residues 287–299 (EQHKEQASTRKEL) are compositionally biased toward basic and acidic residues. Positions 287 to 306 (EQHKEQASTRKELIGSGDRS) are disordered.

This sequence belongs to the prokaryotic/mitochondrial release factor family. Methylated by PrmC. Methylation increases the termination efficiency of RF1.

The protein resides in the cytoplasm. Functionally, peptide chain release factor 1 directs the termination of translation in response to the peptide chain termination codons UAG and UAA. The chain is Peptide chain release factor 1 from Ruthia magnifica subsp. Calyptogena magnifica.